The primary structure comprises 396 residues: NAD(P)H oxidoreductase RTN4IP1, mitochondrial (396 aa).

Residues 1–40 (MEFLKTCVLRRNACTAVCFWRSKVVQKPSVRRISTTSPRS) constitute a mitochondrion transit peptide. Residues 52 to 393 (GKNEVLRFTQ…RGHARGKTVI (342 aa)) form the Enoyl reductase (ER) domain. Residues Ser214, Gly216, Val217, Ser237, Tyr255, Asn276, Leu300, Ala341, Phe343, His386, Ala387, and Arg388 each contribute to the NADPH site.

This sequence belongs to the zinc-containing alcohol dehydrogenase family. Quinone oxidoreductase subfamily. In terms of assembly, interacts with RTN4, UQCRC1 and UQCRC2. In terms of tissue distribution, widely expressed in mitochondria-enriched tissues. Found in heart, muscle, kidney, liver, brain and placenta.

Its subcellular location is the mitochondrion matrix. The protein resides in the mitochondrion outer membrane. It carries out the reaction a 3-demethylubiquinone + NADH + 2 H(+) = a 3-demethylubiquinol + NAD(+). The enzyme catalyses a 3-demethylubiquinone + NADPH + 2 H(+) = a 3-demethylubiquinol + NADP(+). The catalysed reaction is 3-demethylubiquinone-10 + NADH + 2 H(+) = 3-demethylubiquinol-10 + NAD(+). It catalyses the reaction 3-demethylubiquinone-10 + NADPH + 2 H(+) = 3-demethylubiquinol-10 + NADP(+). It functions in the pathway cofactor biosynthesis; ubiquinone biosynthesis. Functionally, NAD(P)H oxidoreductase involved in the ubiquinone biosynthetic pathway. Required for the O-methyltransferase activity of COQ3. Able to catalyze the oxidoreduction of 3-demethylubiquinone into 3-demethylubiquinol in vitro. However, it is unclear if 3-demethylubiquinone constitutes a substrate in vivo. May also play a role in the regulation of retinal ganglion cell (RGC) neurite outgrowth, and hence in the development of the inner retina and optic nerve. Appears to be a potent inhibitor of regeneration following spinal cord injury. The sequence is that of NAD(P)H oxidoreductase RTN4IP1, mitochondrial from Homo sapiens (Human).